The chain runs to 320 residues: GRAM domain-containing protein 2A (320 aa).

The tract at residues 33–56 is disordered; sequence TEKPGKVQEPPDDGSLHWSEGSKG. In terms of domain architecture, GRAM spans 74–141; that stretch reads QQYHKLFKDI…VSVQLIKKHK (68 aa). Residues 278 to 298 traverse the membrane as a helical segment; the sequence is LLKVIFVMICFLVLSSSYLAF.

Phosphorylated.

It is found in the endoplasmic reticulum membrane. It localises to the cell membrane. Its function is as follows. Participates in the organization ofendoplasmic reticulum-plasma membrane contact sites (EPCS) with pleiotropic functions including STIM1 recruitment and calcium homeostasis. Constitutive tether that co-localize with ESYT2/3 tethers at endoplasmic reticulum-plasma membrane contact sites in a phosphatidylinositol lipid-dependent manner. Pre-marks the subset of phosphtidylinositol 4,5-biphosphate (PI(4,5)P2)-enriched EPCS destined for the store operated calcium entry pathway (SOCE). The chain is GRAM domain-containing protein 2A from Mus musculus (Mouse).